A 435-amino-acid polypeptide reads, in one-letter code: Cytokine-dependent hematopoietic cell linker (435 aa).

Residues Y69 and Y96 each carry the phosphotyrosine; by LYN modification. The tract at residues K155–D303 is disordered. A mediates interaction with PLCG1; essential for BCR signaling; involved in restoration of BCR-induced calcium response and ERK2 and JNK2 activation in BLNK-deficient cells expressing LAT region spans residues P160–R165. The tract at residues P178–P182 is mediates interaction with LAT, GRB2, and FGR; involved in translocation to the glycolipid-enriched microdomain and restoration of BCR-induced calcium response in BLNK-deficient DT40 cells expressing LAT. A compositionally biased stretch (polar residues) spans P226–Y249. Residues N290–D303 are compositionally biased toward basic and acidic residues. Positions W309 to L418 constitute an SH2 domain.

When phosphorylated, interacts with PLCG1, PLCG2, GRB2, VAV and LAT. Associated with a tyrosine-phosphorylated polypeptide (p92) in response to immunoreceptor stimulation. Interacts with LBR and AGO2. Interacts with FGR. Part of a complex consisting of CLNK, SKAP1 and FYB1. Interacts (via SH2 domain) with FYB1; this interaction allows SKAP1 and FYB1 to promote tyrosine phosphorylation of CLNK by LYN. Interacts (via SH2 domain) with MAP4K1. In terms of processing, tyrosine-phosphorylated upon BCR cross-linking. Tyrosine phosphorylation at both Tyr-69 and Tyr-96 are required for BCR-induced calcium response and are essential to restore PLCG2-mediated signaling in BLNK-deficient DT40 cells, but this phosphorylation is dispensable in cells expressing LAT. Interacts with the SH2 domain of PLCG1 via phosphorylated Tyr-96. Tyrosine phosphorylation is increased when complexed with SKAP1 and FYB1. As to expression, expressed in T-cells, mast cells, natural killer and natural killer T cells (at protein level). Expressed in cytokine-stimulated hemopoietic cells.

The protein resides in the cytoplasm. An adapter protein which plays a role in the regulation of immunoreceptor signaling, including PLC-gamma-mediated B-cell antigen receptor (BCR) signaling and FC-epsilon R1-mediated mast cell degranulation. Together with FGR, it acts as a negative regulator of natural killer cell-activating receptors and inhibits interferon-gamma production. Acts as a positive regulator of both T-cell receptor and natural killer T (NKT) cell receptor signaling in CD4-positive NKT cells. Together with MAP4K1, it enhances CD3-triggered activation of T-cells and subsequent IL2 production. May be involved in tumor necrosis factor induced cell death by promoting reactive oxidative species generation, and MLKL oligomerization, ultimately leading to necrosis. Involved in phosphorylation of LAT. May be involved in high affinity immunoglobulin epsilon receptor signaling in mast cells. In Mus musculus (Mouse), this protein is Cytokine-dependent hematopoietic cell linker (Clnk).